Reading from the N-terminus, the 108-residue chain is Putative bolA-like protein K11H12.1 (108 aa).

The disordered stretch occupies residues 89–108 (SKWDGQKQEDSPTCRGGFGK).

The protein belongs to the BolA/IbaG family.

This is Putative bolA-like protein K11H12.1 from Caenorhabditis elegans.